The primary structure comprises 74 residues: Serine rich endogenous peptide 16 (74 aa).

Residues 1 to 31 (MATKISHLVSLLLSLLLLLLFISSQVGFTEA) form the signal peptide. The segment at 29–74 (TEAKRDERKKMSSPPIPSPLIPSPPIPPPPPRFYVPPSKSRRGKGP) is disordered. The span at 42–62 (PPIPSPLIPSPPIPPPPPRFY) shows a compositional bias: pro residues. The SCOOP motif motif lies at 60-74 (RFYVPPSKSRRGKGP). The short motif at 66–68 (SKS) is the SxS motif essential for MIK2 binding element.

This sequence belongs to the serine rich endogenous peptide (SCOOP) phytocytokine family. Interacts with MIK2 (via extracellular leucine-rich repeat domain); this interaction triggers the formation of complex between MIK2 and the BAK1/SERK3 and SERK4 coreceptors, and subsequent BAK1 activation by phosphorylation.

The protein localises to the cell membrane. The protein resides in the secreted. It is found in the extracellular space. It localises to the apoplast. In terms of biological role, brassicaceae-specific phytocytokine (plant endogenous peptide released into the apoplast) perceived by MIK2 in a BAK1/SERK3 and SERK4 coreceptors-dependent manner, that modulates various physiological and antimicrobial processes including growth prevention and reactive oxygen species (ROS) response regulation. The sequence is that of Serine rich endogenous peptide 16 from Arabidopsis thaliana (Mouse-ear cress).